The chain runs to 341 residues: L-threonine 3-dehydrogenase (341 aa).

Cys38 provides a ligand contact to Zn(2+). Catalysis depends on charge relay system residues Thr40 and His43. The Zn(2+) site is built by His63, Glu64, Cys93, Cys96, Cys99, and Cys107. NAD(+) contacts are provided by residues Ile175, Asp195, Arg200, 262 to 264 (LGI), and 286 to 287 (IY).

It belongs to the zinc-containing alcohol dehydrogenase family. As to quaternary structure, homotetramer. Requires Zn(2+) as cofactor.

It localises to the cytoplasm. It carries out the reaction L-threonine + NAD(+) = (2S)-2-amino-3-oxobutanoate + NADH + H(+). The protein operates within amino-acid degradation; L-threonine degradation via oxydo-reductase pathway; glycine from L-threonine: step 1/2. Catalyzes the NAD(+)-dependent oxidation of L-threonine to 2-amino-3-ketobutyrate. This is L-threonine 3-dehydrogenase from Yersinia pseudotuberculosis serotype O:1b (strain IP 31758).